Reading from the N-terminus, the 357-residue chain is Histidinol-phosphate aminotransferase (357 aa).

An N6-(pyridoxal phosphate)lysine modification is found at K212.

The protein belongs to the class-II pyridoxal-phosphate-dependent aminotransferase family. Histidinol-phosphate aminotransferase subfamily. Homodimer. Pyridoxal 5'-phosphate serves as cofactor.

The enzyme catalyses L-histidinol phosphate + 2-oxoglutarate = 3-(imidazol-4-yl)-2-oxopropyl phosphate + L-glutamate. It functions in the pathway amino-acid biosynthesis; L-histidine biosynthesis; L-histidine from 5-phospho-alpha-D-ribose 1-diphosphate: step 7/9. The polypeptide is Histidinol-phosphate aminotransferase (Pectobacterium atrosepticum (strain SCRI 1043 / ATCC BAA-672) (Erwinia carotovora subsp. atroseptica)).